Consider the following 93-residue polypeptide: Small ribosomal subunit protein uS19 (93 aa).

The protein belongs to the universal ribosomal protein uS19 family.

In terms of biological role, protein S19 forms a complex with S13 that binds strongly to the 16S ribosomal RNA. This Mycolicibacterium smegmatis (strain ATCC 700084 / mc(2)155) (Mycobacterium smegmatis) protein is Small ribosomal subunit protein uS19.